The primary structure comprises 90 residues: Keratin-associated protein 19-1 (90 aa).

The segment at 5-84 (GSYYGGLGYS…CCRPSYNGGY (80 aa)) is 26 X 2 AA repeats of G-[YCGS].

Belongs to the KRTAP type 19 family. In terms of assembly, interacts with hair keratins. Detected in the upper portion of the hair cortex.

In the hair cortex, hair keratin intermediate filaments are embedded in an interfilamentous matrix, consisting of hair keratin-associated proteins (KRTAP), which are essential for the formation of a rigid and resistant hair shaft through their extensive disulfide bond cross-linking with abundant cysteine residues of hair keratins. The matrix proteins include the high-sulfur and high-glycine-tyrosine keratins. This chain is Keratin-associated protein 19-1 (KRTAP19-1), found in Homo sapiens (Human).